The following is a 224-amino-acid chain: Germin-like protein 8-4 (224 aa).

Residues 1–23 (MASSSSLYLLAALLALASWQAIA) form the signal peptide. An intrachain disulfide couples cysteine 33 to cysteine 48. The 144-residue stretch at 70–213 (STMNKVGSNV…AFQVEKKVID (144 aa)) folds into the Cupin type-1 domain. Residue asparagine 78 is glycosylated (N-linked (GlcNAc...) asparagine). Histidine 111, histidine 113, glutamate 118, and histidine 158 together coordinate Mn(2+).

The protein belongs to the germin family. Oligomer (believed to be a pentamer but probably hexamer).

The protein localises to the secreted. Its subcellular location is the extracellular space. It is found in the apoplast. Its function is as follows. Plays a role in broad-spectrum disease resistance. Probably has no oxalate oxidase activity even if the active site is conserved. The polypeptide is Germin-like protein 8-4 (GER1) (Oryza sativa subsp. japonica (Rice)).